The sequence spans 404 residues: CinA-like protein (404 aa).

The protein belongs to the CinA family.

The chain is CinA-like protein from Deinococcus radiodurans (strain ATCC 13939 / DSM 20539 / JCM 16871 / CCUG 27074 / LMG 4051 / NBRC 15346 / NCIMB 9279 / VKM B-1422 / R1).